The primary structure comprises 421 residues: MADKKPSKEDPVNMVKLLTRNVLDGIFDDLMENNVLNTEELRNLGKGLNFMVNNAGNLVDNITEKAQMVGKILKDRLLSHPKQLSLEYQHESEDQESEESSASSSSSTESEEENEESKDEERAASAHSMAVPPTAPLEIQGAQPSGRLKLCPHAHFRELKTKRADEIYPVMEKEGRTRLALIICSKEFHYLLNRNGSELDLLGMQDLLENLGYSVVIEENLTAQEMETALRQFAARPEHQSSDSTFLVFMSHGILNGICGTKHWDQEPDVLHDDTIFEIFNNRNCRSLRDKPKVIIMQACRGSGAGIVWFTTDSGKASADTHGQLLQSSICNDAVTKAHVEKDFIAFKSSTPHNVSWRHEMSGSVFISQIIYYFKEYSWSHHLEEIFRKVQRSFETPNVVTQLPTIERLSMTRYFYLFPGN.

The region spanning 1 to 92 (MADKKPSKED…QLSLEYQHES (92 aa)) is the CARD domain. Residue serine 85 is modified to Phosphoserine. The tract at residues 88–131 (YQHESEDQESEESSASSSSSTESEEENEESKDEERAASAHSMAV) is disordered. Residues 109–118 (ESEEENEESK) are compositionally biased toward acidic residues. Catalysis depends on residues histidine 252 and cysteine 300.

It belongs to the peptidase C14A family. Heterotetramer that consists of two anti-parallel arranged heterodimers, each one formed by two subunits (Potential). May interact with TRAF2.

Involved in the activation cascade of caspases responsible for apoptosis execution. The polypeptide is Caspase-12 (Macaca mulatta (Rhesus macaque)).